The following is a 143-amino-acid chain: Large ribosomal subunit protein uL16 (143 aa).

It belongs to the universal ribosomal protein uL16 family. As to quaternary structure, part of the 50S ribosomal subunit.

In terms of biological role, binds 23S rRNA and is also seen to make contacts with the A and possibly P site tRNAs. In Fusobacterium nucleatum subsp. nucleatum (strain ATCC 25586 / DSM 15643 / BCRC 10681 / CIP 101130 / JCM 8532 / KCTC 2640 / LMG 13131 / VPI 4355), this protein is Large ribosomal subunit protein uL16.